A 112-amino-acid chain; its full sequence is uncharacterized protein (112 aa).

The protein resides in the plastid. It localises to the chloroplast. This is an uncharacterized protein from Chlamydomonas reinhardtii (Chlamydomonas smithii).